The sequence spans 730 residues: Exostosin-1a (730 aa).

Residues 1-6 are Cytoplasmic-facing; it reads MQAKKR. A helical; Signal-anchor for type II membrane protein transmembrane segment spans residues 7 to 27; sequence YLILFSAGVCLILLFYLQGPA. Residues 28–730 lie on the Lumenal side of the membrane; the sequence is SRRTPKRGDD…RKKYRDIERL (703 aa). N-linked (GlcNAc...) asparagine glycosylation occurs at asparagine 314. UDP-N-acetyl-alpha-D-glucosamine is bound by residues arginine 533, aspartate 549, glutamate 550, aspartate 551, glutamate 637, aspartate 638, and arginine 685. Aspartate 551 contacts Mn(2+). An intrachain disulfide couples cysteine 636 to cysteine 688. Residue aspartate 638 is part of the active site.

Belongs to the glycosyltransferase 47 family. Requires Mn(2+) as cofactor.

It localises to the endoplasmic reticulum membrane. It carries out the reaction 3-O-{[(1-&gt;4)-beta-D-GlcA-(1-&gt;4)-alpha-D-GlcNAc](n)-(1-&gt;4)-beta-D-GlcA-(1-&gt;3)-beta-D-Gal-(1-&gt;3)-beta-D-Gal-(1-&gt;4)-beta-D-Xyl}-L-seryl-[protein] + UDP-N-acetyl-alpha-D-glucosamine = 3-O-{alpha-D-GlcNAc-[(1-&gt;4)-beta-D-GlcA-(1-&gt;4)-alpha-D-GlcNAc](n)-(1-&gt;4)-beta-D-GlcA-(1-&gt;3)-beta-D-Gal-(1-&gt;3)-beta-D-Gal-(1-&gt;4)-beta-D-Xyl}-L-seryl-[protein] + UDP + H(+). It catalyses the reaction 3-O-{alpha-D-GlcNAc-[(1-&gt;4)-beta-D-GlcA-(1-&gt;4)-alpha-D-GlcNAc](n)-(1-&gt;4)-beta-D-GlcA-(1-&gt;3)-beta-D-Gal-(1-&gt;3)-beta-D-Gal-(1-&gt;4)-beta-D-Xyl}-L-seryl-[protein] + UDP-alpha-D-glucuronate = 3-O-{[(1-&gt;4)-beta-D-GlcA-(1-&gt;4)-alpha-D-GlcNAc](n+1)-(1-&gt;4)-beta-D-GlcA-(1-&gt;3)-beta-D-Gal-(1-&gt;3)-beta-D-Gal-(1-&gt;4)-beta-D-Xyl}-L-seryl-[protein] + UDP + H(+). The protein operates within protein modification; protein glycosylation. In terms of biological role, glycosyltransferase required for the biosynthesis of heparan-sulfate. The polypeptide is Exostosin-1a (ext1a) (Danio rerio (Zebrafish)).